A 220-amino-acid polypeptide reads, in one-letter code: UPF0319 protein CKO_02102 (220 aa).

The first 20 residues, 1–20 (MKTGIITMLFVLYLPVTAFA), serve as a signal peptide directing secretion.

It belongs to the UPF0319 family.

The chain is UPF0319 protein CKO_02102 from Citrobacter koseri (strain ATCC BAA-895 / CDC 4225-83 / SGSC4696).